A 143-amino-acid polypeptide reads, in one-letter code: Large ribosomal subunit protein uL15 (143 aa).

The segment at 1–51 is disordered; the sequence is MELNGIKPAAGAKHAKRRVGRGIGSGIGKTAGRGHKGQKSRAGGFHKVGFE. The segment covering 21 to 31 has biased composition (gly residues); the sequence is RGIGSGIGKTA.

It belongs to the universal ribosomal protein uL15 family. In terms of assembly, part of the 50S ribosomal subunit.

Binds to the 23S rRNA. The polypeptide is Large ribosomal subunit protein uL15 (Variovorax paradoxus (strain S110)).